Here is a 312-residue protein sequence, read N- to C-terminus: tRNA dimethylallyltransferase (312 aa).

Gly11 to Thr18 is an ATP binding site. Position 13 to 18 (Thr13 to Thr18) interacts with substrate. The interaction with substrate tRNA stretch occupies residues Asp36 to Cys39.

The protein belongs to the IPP transferase family. Monomer. Mg(2+) serves as cofactor.

The enzyme catalyses adenosine(37) in tRNA + dimethylallyl diphosphate = N(6)-dimethylallyladenosine(37) in tRNA + diphosphate. In terms of biological role, catalyzes the transfer of a dimethylallyl group onto the adenine at position 37 in tRNAs that read codons beginning with uridine, leading to the formation of N6-(dimethylallyl)adenosine (i(6)A). This Caldicellulosiruptor saccharolyticus (strain ATCC 43494 / DSM 8903 / Tp8T 6331) protein is tRNA dimethylallyltransferase.